The chain runs to 220 residues: Cytidylate kinase (220 aa).

10–18 (GPASSGKST) provides a ligand contact to ATP.

The protein belongs to the cytidylate kinase family. Type 1 subfamily.

The protein localises to the cytoplasm. The catalysed reaction is CMP + ATP = CDP + ADP. It catalyses the reaction dCMP + ATP = dCDP + ADP. In Lactococcus lactis subsp. cremoris (strain SK11), this protein is Cytidylate kinase.